A 172-amino-acid polypeptide reads, in one-letter code: Small ribosomal subunit protein uS5 (172 aa).

An S5 DRBM domain is found at 16-79; that stretch reads LKEKLVHINR…EDGKKNVIKV (64 aa).

It belongs to the universal ribosomal protein uS5 family. As to quaternary structure, part of the 30S ribosomal subunit. Contacts proteins S4 and S8.

With S4 and S12 plays an important role in translational accuracy. Functionally, located at the back of the 30S subunit body where it stabilizes the conformation of the head with respect to the body. This Chlorobium phaeobacteroides (strain DSM 266 / SMG 266 / 2430) protein is Small ribosomal subunit protein uS5.